Consider the following 413-residue polypeptide: Peptide chain release factor 1, mitochondrial (413 aa).

The transit peptide at 1 to 40 (MRVLIRPNFLSNLIRYCSRGTHSHDRSLRSVLSSNMIRLY) directs the protein to the mitochondrion. An N5-methylglutamine modification is found at Gln-287.

This sequence belongs to the prokaryotic/mitochondrial release factor family. In terms of processing, methylation increases the termination efficiency of RF1. Mostly expressed in seedlings, stems and adult plants, and, to a lower extent, in siliques. Barely detected in etiolated seedlings and roots.

The protein localises to the mitochondrion. In terms of biological role, peptide chain release factor 1 directs the termination of translation in response to the peptide chain termination codons UAG and UAA in mitochondria. This is Peptide chain release factor 1, mitochondrial from Arabidopsis thaliana (Mouse-ear cress).